Reading from the N-terminus, the 276-residue chain is Tyrosinase (276 aa).

Cu cation-binding residues include H38, H56, H66, H193, H197, and H219.

Belongs to the tyrosinase family. Cu(2+) serves as cofactor.

The enzyme catalyses 2 L-dopa + O2 = 2 L-dopaquinone + 2 H2O. It catalyses the reaction L-tyrosine + O2 = L-dopaquinone + H2O. This is a copper-containing oxidase that functions in the formation of pigments such as melanins and other polyphenolic compounds. The sequence is that of Tyrosinase (melC2) from Streptomyces galbus.